Here is a 2442-residue protein sequence, read N- to C-terminus: Piezo-type mechanosensitive ion channel component 1 (2442 aa).

At 1-5 (MTVPP) the chain is on the extracellular side. A helical transmembrane segment spans residues 6-26 (LLKSCVVKLLLPAALLAAAII). Position 27 (Arg27) is a topological domain, cytoplasmic. A helical membrane pass occupies residues 28 to 48 (PSFLSIGYVLLALVSAVLPPI). Topologically, residues 49–56 (RKSLALPK) are extracellular. Residues 57–77 (LVGTFVIITFLFCLAVALGVG) traverse the membrane as a helical segment. Residues 78–122 (SYQISEQVVHKNDRTYICNRSDTTLFRSIGLVRFHPTGTFESTRA) are Cytoplasmic-facing. A helical membrane pass occupies residues 123-143 (FLPEIIATSAALLTIIIVMFL). The Extracellular segment spans residues 144-173 (SHRDEQLDVVGDVVTVRSESGREQRRQRKL). The helical transmembrane segment at 174-196 (AAIMWSAIGNSLRRLTNFVLFLF) threads the bilayer. Over 197–198 (TA) the chain is Cytoplasmic. Residues 199-219 (YVGIVKPSLSNSIYFLAFLFI) traverse the membrane as a helical segment. The Extracellular segment spans residues 220 to 239 (STWWSTYTPLRHGVYNQIKK). Residues 240 to 260 (FLIFYSALHFLVLYTYQIPIV) traverse the membrane as a helical segment. The Cytoplasmic segment spans residues 261–303 (HHSWLPTGSFLPRLFGLTVLMDSSCPEWWKFPFVAPDFNDDDL). Residues 304-324 (IMKWPLYANPIVVLVFFYLTV) traverse the membrane as a helical segment. Residues 325–454 (AQYKFTRNGS…GDKESAASKG (130 aa)) lie on the Extracellular side of the membrane. Residues Asn332, Asn392, and Asn440 are each glycosylated (N-linked (GlcNAc...) asparagine). The disordered stretch occupies residues 389–417 (LLSNASSSANDDEQGRARSRSPLRNGEEQ). Residues 455–475 (MIAVMTFVIFHSYSIALTAMM) traverse the membrane as a helical segment. At 476–478 (TWA) the chain is on the cytoplasmic side. Residues 479–499 (LLYHSIFGLILLILTCILWIF) traverse the membrane as a helical segment. At 500 to 506 (RDTRKSS) the chain is on the extracellular side. Residues 507–527 (FAMAPIILMYIEFLLILQYFL) form a helical membrane-spanning segment. Residues 528-552 (SMDIHAEIGDPAWMNFVGIEWTTLP) are Cytoplasmic-facing. Residues 553–573 (VHAVIILCVQTLLTLPVFLLL) form a helical membrane-spanning segment. The Extracellular portion of the chain corresponds to 574 to 633 (RLARREKFYESLSDYERQRRINSYGTFGASKTGAGGVAVAKFQDPKSRKFAAFVEYLSNK). The helical transmembrane segment at 634–654 (VSVYFIFVVSVVLLVVSTCFA) threads the bilayer. Residues 655 to 656 (PN) are Cytoplasmic-facing. Residues 657–677 (FYNILFFALWALNLIYLKFSF) traverse the membrane as a helical segment. The Extracellular segment spans residues 678-683 (RLYRGL). Residues 684–704 (AYAFWLTLTFYTSIVIIALYI) traverse the membrane as a helical segment. Topologically, residues 705-739 (YQFPGVSQWIIRNTSLSQEWLNAIGLVDFRAIGES) are cytoplasmic. A helical membrane pass occupies residues 740 to 760 (GALFLQLLAPIALFVVTMLQL). Residues 761–832 (KFFHGPWSRA…WRFFEVHISK (72 aa)) are Extracellular-facing. The tract at residues 768 to 798 (SRATSPRRAENDPPTSTTEAAAVASTSGTQG) is disordered. The span at 782-794 (TSTTEAAAVASTS) shows a compositional bias: low complexity. Asn816 is a glycosylation site (N-linked (GlcNAc...) asparagine). A helical transmembrane segment spans residues 833-853 (IVFVIIAIFIANNINALYIPL). Over 854–874 (VILLSLAICLPSAADGIFSLF) the chain is Cytoplasmic. A helical transmembrane segment spans residues 875 to 895 (MCAYLFLVALSKMIYQLDIVP). The Extracellular segment spans residues 896-931 (ELSQIDRGVGADNCSHGNISMPEWFGLKKEVEGTEP). N-linked (GlcNAc...) asparagine glycans are attached at residues Asn908 and Asn913. Residues 932 to 952 (IYMLFGVIVSIIALAFQSIVI) form a helical membrane-spanning segment. Topologically, residues 953-990 (YRQRHYRASLGLPESMRAKVFPDFHHSHFDRSLKNAIQ) are cytoplasmic. A helical membrane pass occupies residues 991 to 1011 (FLIDYGFYKFGLEITMIAIGI). A topological domain (extracellular) is located at residue Asp1012. The helical transmembrane segment at 1013-1033 (IFNRMDALAAIQCFWLVLFAL) threads the bilayer. The Cytoplasmic segment spans residues 1034–1041 (NKRVFVRR). The helical transmembrane segment at 1042–1062 (IWVFYVIYMAILYPLQFFSYV) threads the bilayer. Residues 1063 to 1096 (GLPPDSCIEYPWSYWIPSYSDDARFNLSYLLNLS) lie on the Extracellular side of the membrane. N-linked (GlcNAc...) asparagine glycans are attached at residues Asn1088 and Asn1094. The helical transmembrane segment at 1097–1117 (IYGVNWPSAYLIGDFFVLLLA) threads the bilayer. At 1118–1160 (SCQLAVFRREGEDNDSIYNDGNFVIKPENPQYDFIDTKKSYVD) the chain is on the cytoplasmic side. The chain crosses the membrane as a helical span at residues 1161–1181 (YFKSFVFHYGHWITLMSTLAA). At 1182–1187 (GIAGTS) the chain is on the extracellular side. The helical transmembrane segment at 1188–1210 (LFALGYIIFTLTMLWSGNNLYVM) threads the bilayer. The Cytoplasmic portion of the chain corresponds to 1211–1231 (NSTLRSFEHTLKRWNALLGYT). The chain crosses the membrane as a helical span at residues 1232–1252 (LFTITMKVCLQIFGCVFLSWF). The Extracellular segment spans residues 1253–1299 (DQSGGWGKTLCIVRQLFSITCVNNECHVLKELEDFSKACAVETKEGN). A helical membrane pass occupies residues 1300-1320 (IGFDVIALSFLVFQIRIFHSW). Residues 1321–1615 (YFQHCMVEYR…VVNCIGAHTD (295 aa)) are Cytoplasmic-facing. The segment at 1463-1502 (DTIKDPDSRALIAVSEPEARKPGGTEETDGDEDEDNKDSK) is disordered. Over residues 1488–1498 (EETDGDEDEDN) the composition is skewed to acidic residues. The chain crosses the membrane as a helical span at residues 1616-1636 (ILCYFFAIMTQVMTGGLITLP). Residues 1637–1654 (LPLMSLFWGNLSNPRPSK) are Extracellular-facing. N-linked (GlcNAc...) asparagine glycosylation occurs at Asn1646. The chain crosses the membrane as a helical span at residues 1655–1675 (FFWVTMITYTECVIVIKFVCQ). Over 1676 to 1706 (FAFMPYNSITWRTEHQMDPMSLDKLFGVSQR) the chain is Cytoplasmic. The chain crosses the membrane as a helical span at residues 1707–1727 (DSFALWDIVLLFSLFFHRYML). Topologically, residues 1728-1833 (RKLGLWKDAN…KFRYIRDLYP (106 aa)) are extracellular. The N-linked (GlcNAc...) asparagine glycan is linked to Asn1737. A helical transmembrane segment spans residues 1834 to 1854 (IMFGIDVICFLIMTFGYSAFG). Topologically, residues 1855–1866 (EGGSGNVLDDVK) are cytoplasmic. The helical transmembrane segment at 1867-1887 (ASRIPVTLVVMLVGMTLAIII) threads the bilayer. Residues 1888–1900 (DRALYLRKSVVGK) lie on the Extracellular side of the membrane. The helical transmembrane segment at 1901–1921 (LIYQVLMIAFLHIWVFLVLPN) threads the bilayer. At 1922–1930 (MTRRSAISN) the chain is on the cytoplasmic side. The chain crosses the membrane as a helical span at residues 1931 to 1951 (HVAQALYVIKSCYFLVSAWQI). Over 1952 to 2046 (RNGYPELCIG…KGKLVKYMMG (95 aa)) the chain is Extracellular. The helical transmembrane segment at 2047-2067 (FPIIIGVVIFIFSPLLLWSLL) threads the bilayer. Topologically, residues 2068–2346 (NQIGTISMPE…VGFIDRAFPS (279 aa)) are cytoplasmic. Residues 2347–2367 (FLAKVFKGGVIAVYLSVILVV) form a helical membrane-spanning segment. Residues 2368–2442 (GRGLVRGIFT…WTRMSKKKQE (75 aa)) lie on the Extracellular side of the membrane.

It belongs to the PIEZO (TC 1.A.75) family. In terms of tissue distribution, expressed in the pharyngeal-intestinal and spermathecal-uterine valves and in multiple reproductive tissues including the germline, somatic oviduct, and spermatheca. During reproduction, it is expressed in sheath cells, sperm, both spermathecal valves and the spermathecal bag cells.

Its subcellular location is the cell membrane. Functionally, pore-forming subunit of a mechanosensitive non-specific cation channel. Generates currents characterized by a linear current-voltage relationship. Plays a role in reproduction by positively regulating inter-tissue signaling to promote oocyte maturation, ovulation and fertilization, and sperm navigation from and to the spermatheca. May play a role in regulating cytosolic and endoplasmic reticulum calcium ion release. This Caenorhabditis elegans protein is Piezo-type mechanosensitive ion channel component 1.